A 374-amino-acid chain; its full sequence is DNA-directed RNA polymerase subunit alpha (374 aa).

An alpha N-terminal domain (alpha-NTD) region spans residues 1–270; the sequence is MIFDEDSSSV…DQFQQFINFD (270 aa). An alpha C-terminal domain (alpha-CTD) region spans residues 282–374; it reads KDVLPYDSNL…ESLSKQYSEE (93 aa).

This sequence belongs to the RNA polymerase alpha chain family. As to quaternary structure, homodimer. The RNAP catalytic core consists of 2 alpha, 1 beta, 1 beta' and 1 omega subunit. When a sigma factor is associated with the core the holoenzyme is formed, which can initiate transcription.

The enzyme catalyses RNA(n) + a ribonucleoside 5'-triphosphate = RNA(n+1) + diphosphate. In terms of biological role, DNA-dependent RNA polymerase catalyzes the transcription of DNA into RNA using the four ribonucleoside triphosphates as substrates. The protein is DNA-directed RNA polymerase subunit alpha of Ehrlichia ruminantium (strain Gardel).